Consider the following 201-residue polypeptide: Superoxide dismutase [Mn] (201 aa).

Positions 27, 81, 163, and 167 each coordinate Mn(2+).

The protein belongs to the iron/manganese superoxide dismutase family. As to quaternary structure, homodimer. Mn(2+) serves as cofactor.

It localises to the secreted. It carries out the reaction 2 superoxide + 2 H(+) = H2O2 + O2. In terms of biological role, destroys superoxide anion radicals which are normally produced within the cells and which are toxic to biological systems. This chain is Superoxide dismutase [Mn] (sodA), found in Streptococcus pyogenes.